A 416-amino-acid chain; its full sequence is Phosphoglycerate kinase (416 aa).

(2R)-3-phosphoglycerate contacts are provided by valine 23, aspartate 24, phenylalanine 25, asparagine 26, glutamine 38, arginine 39, serine 62, histidine 63, glycine 65, arginine 66, leucine 121, arginine 122, histidine 168, and arginine 169. Glycine 212 lines the ADP pocket. Glycine 212 is a binding site for CDP. The AMP site is built by alanine 213 and lysine 214. Alanine 213 provides a ligand contact to ATP. Position 213 (alanine 213) interacts with Mg(2+). Alanine 216 and aspartate 217 together coordinate Mg(2+). A CDP-binding site is contributed by aspartate 217. Lysine 218 is a binding site for AMP. Lysine 218 contributes to the ATP binding site. An ADP-binding site is contributed by glycine 236. Position 236 (glycine 236) interacts with CDP. Positions 237 and 311 each coordinate AMP. Glycine 237 and glycine 311 together coordinate ATP. Positions 336 and 341 each coordinate CDP. Residue phenylalanine 341 participates in ADP binding. Glutamate 342 provides a ligand contact to AMP. Residues glutamate 342, aspartate 373, and threonine 374 each contribute to the ATP site. Aspartate 373 serves as a coordination point for Mg(2+).

Belongs to the phosphoglycerate kinase family. Monomer. It depends on Mg(2+) as a cofactor.

Its subcellular location is the cytoplasm. It is found in the mitochondrion. The catalysed reaction is (2R)-3-phosphoglycerate + ATP = (2R)-3-phospho-glyceroyl phosphate + ADP. Its pathway is carbohydrate degradation; glycolysis; pyruvate from D-glyceraldehyde 3-phosphate: step 2/5. Its function is as follows. Catalyzes one of the two ATP producing reactions in the glycolytic pathway via the reversible conversion of 1,3-diphosphoglycerate to 3-phosphoglycerate. Both L- and D- forms of purine and pyrimidine nucleotides can be used as substrates, but the activity is much lower on pyrimidines. Negatively regulates the biosynthesis of acetyl-CoA from pyruvate in the mitochondrion. This is Phosphoglycerate kinase (PGK1) from Eremothecium gossypii (strain ATCC 10895 / CBS 109.51 / FGSC 9923 / NRRL Y-1056) (Yeast).